The chain runs to 467 residues: MSKKLPEDFIFGGATAAYQAEGAIKIDGKGPVAWDKFLEENYWYTAEPASDFYHQYPVDLKLCEEFGINGIRISIAWSRIFPNGYGEVNPKGVEFYHKLFAECKKRKVEPFVTLHHFDTPEVLHSNGDFLNRENIEHFVNYAKFCFEEFSEVNYWTTFNEIGPIGDGQYLVGKFPPGIKYDFEKLFQSHHNMVLAHAKAVNLFKKNGYHGEIGMVCALPTKYPYDPNNPKDVRAAELDDIIHNKFILDATFKGEYSKNTMEGVNHILQVNGGKLDLREEDFEELKAAKDLNDFLGINYYMSDWMAEYDGETEIIHNATGNKGSSKYQIKGVGQRKANESIPRTDWDWIIYPQGLYDQISRVKKDYPNYKKIYITENGLGYKDVFEDNTVYDDARIDYIRQHLEVISDAIKDGANVKGYFLWSLMDVFSWSNGYEKRYGLFYVDFETQKRYPKKSAYWYKKVSETKEV.

D-galactose 6-phosphate is bound by residues Gln-19, His-116, Asn-159, Glu-160, and Asn-297. The active-site Proton donor is the Glu-160. Glu-375 (nucleophile) is an active-site residue. 4 residues coordinate D-galactose 6-phosphate: Ser-428, Trp-429, Lys-435, and Tyr-437.

It belongs to the glycosyl hydrolase 1 family.

It catalyses the reaction a 6-phospho-beta-D-galactoside + H2O = D-galactose 6-phosphate + an alcohol. It participates in carbohydrate metabolism; lactose degradation; D-galactose 6-phosphate and beta-D-glucose from lactose 6-phosphate: step 1/1. With respect to regulation, inhibited by both galactose-6-phosphate and ATP. The chain is 6-phospho-beta-galactosidase from Leptotrichia buccalis (strain ATCC 14201 / DSM 1135 / JCM 12969 / NCTC 10249 / C-1013-b).